The following is a 417-amino-acid chain: MKFVIESLTKNSGRLGRLHIKDGAPGQRTPLLMQTTKGGSIPYLSADVFESHVTETPQLLELTLSTIDHMSEALAQWNSADRGLSDYIGFPGHLNVLLLRDPCETTPAGGNDRDIQPLFTRRGKESLSAQRYMEMVASLRPDIYQGLCDADTNAESAKKRVQKSVDRTEKFMHYIYEHKSKVDSTLLAPIVGGYNTFARTQSIKHALEQPSGSYGGYVFEGFHTNGLSATILDASKLLPIVEHCVGQLEEEKPRMVPGAYTPLTTLELIGLGMDLFDTSYAYCAAVNFKALTFTFVQDEVVHVPLLDITDDAIKEDFSPLLKNCDCLSCQKHTRAYVHHLYKTNELLGPILLMVHNLHHYMAFFEAIRESIARDGLPQLTELVRRQNGDSQVDYSIAPNRKVISKATMGKGFAAAAV.

Zn(2+) is bound by residues Cys-324, Cys-326, Cys-329, and His-355.

The protein belongs to the queuine tRNA-ribosyltransferase family. QTRT2 subfamily. In terms of assembly, heterodimer of a catalytic subunit and an accessory subunit. Zn(2+) serves as cofactor.

Its subcellular location is the cytoplasm. Functionally, non-catalytic subunit of the queuine tRNA-ribosyltransferase (TGT) that catalyzes the base-exchange of a guanine (G) residue with queuine (Q) at position 34 (anticodon wobble position) in tRNAs with GU(N) anticodons (tRNA-Asp, -Asn, -His and -Tyr), resulting in the hypermodified nucleoside queuosine (7-(((4,5-cis-dihydroxy-2-cyclopenten-1-yl)amino)methyl)-7-deazaguanosine). In Drosophila pseudoobscura pseudoobscura (Fruit fly), this protein is Queuine tRNA-ribosyltransferase accessory subunit 2.